The sequence spans 273 residues: Proteasome subunit beta type-10 (273 aa).

An N-acetylmethionine modification is found at Met-1. Positions 1–39 (MLKPALEPRGGFSFENCQRNASLERVLPGLKVPHARKTG) are cleaved as a propeptide — removed in mature form. The Nucleophile role is filled by Thr-40. Ser-230 is subject to Phosphoserine.

Belongs to the peptidase T1B family. The 26S proteasome consists of a 20S proteasome core and two 19S regulatory subunits. The 20S proteasome core is composed of 28 subunits that are arranged in four stacked rings, resulting in a barrel-shaped structure. The two end rings are each formed by seven alpha subunits, and the two central rings are each formed by seven beta subunits. The catalytic chamber with the active sites is on the inside of the barrel. Component of the immunoproteasome, where it displaces the equivalent housekeeping subunit PSMB7. Component of the spermatoproteasome, a form of the proteasome specifically found in testis. As to quaternary structure, (Microbial infection) Interacts with HIV-1 TAT protein. Autocleaved. The resulting N-terminal Thr residue of the mature subunit is responsible for the nucleophile proteolytic activity.

The protein localises to the cytoplasm. The protein resides in the nucleus. It carries out the reaction Cleavage of peptide bonds with very broad specificity.. Functionally, the proteasome is a multicatalytic proteinase complex which is characterized by its ability to cleave peptides with Arg, Phe, Tyr, Leu, and Glu adjacent to the leaving group at neutral or slightly basic pH. The proteasome has an ATP-dependent proteolytic activity. This subunit is involved in antigen processing to generate class I binding peptides. This Homo sapiens (Human) protein is Proteasome subunit beta type-10 (PSMB10).